A 184-amino-acid polypeptide reads, in one-letter code: Large ribosomal subunit protein uL5c (184 aa).

Belongs to the universal ribosomal protein uL5 family. In terms of assembly, part of the 50S ribosomal subunit; contacts the 5S rRNA.

The protein localises to the plastid. The protein resides in the chloroplast. Functionally, binds 5S rRNA, forms part of the central protuberance of the 50S subunit. This Mesostigma viride (Green alga) protein is Large ribosomal subunit protein uL5c (rpl5).